Here is a 234-residue protein sequence, read N- to C-terminus: Leucyl/phenylalanyl-tRNA--protein transferase (234 aa).

The protein belongs to the L/F-transferase family.

The protein resides in the cytoplasm. It catalyses the reaction N-terminal L-lysyl-[protein] + L-leucyl-tRNA(Leu) = N-terminal L-leucyl-L-lysyl-[protein] + tRNA(Leu) + H(+). The enzyme catalyses N-terminal L-arginyl-[protein] + L-leucyl-tRNA(Leu) = N-terminal L-leucyl-L-arginyl-[protein] + tRNA(Leu) + H(+). It carries out the reaction L-phenylalanyl-tRNA(Phe) + an N-terminal L-alpha-aminoacyl-[protein] = an N-terminal L-phenylalanyl-L-alpha-aminoacyl-[protein] + tRNA(Phe). In terms of biological role, functions in the N-end rule pathway of protein degradation where it conjugates Leu, Phe and, less efficiently, Met from aminoacyl-tRNAs to the N-termini of proteins containing an N-terminal arginine or lysine. This Escherichia coli O7:K1 (strain IAI39 / ExPEC) protein is Leucyl/phenylalanyl-tRNA--protein transferase.